A 342-amino-acid chain; its full sequence is Glycerol-3-phosphate dehydrogenase [NAD(P)+] (342 aa).

NADPH contacts are provided by S13, W14, and K108. Residues K108, G139, and S141 each contribute to the sn-glycerol 3-phosphate site. A143 provides a ligand contact to NADPH. Positions 194, 247, 257, 258, and 259 each coordinate sn-glycerol 3-phosphate. K194 acts as the Proton acceptor in catalysis. R258 serves as a coordination point for NADPH. Positions 282 and 284 each coordinate NADPH.

Belongs to the NAD-dependent glycerol-3-phosphate dehydrogenase family.

The protein localises to the cytoplasm. It catalyses the reaction sn-glycerol 3-phosphate + NAD(+) = dihydroxyacetone phosphate + NADH + H(+). The catalysed reaction is sn-glycerol 3-phosphate + NADP(+) = dihydroxyacetone phosphate + NADPH + H(+). The protein operates within membrane lipid metabolism; glycerophospholipid metabolism. In terms of biological role, catalyzes the reduction of the glycolytic intermediate dihydroxyacetone phosphate (DHAP) to sn-glycerol 3-phosphate (G3P), the key precursor for phospholipid synthesis. The protein is Glycerol-3-phosphate dehydrogenase [NAD(P)+] of Lactococcus lactis subsp. cremoris (strain SK11).